A 333-amino-acid polypeptide reads, in one-letter code: Pantothenate synthetase (333 aa).

Residue 27 to 34 (MGALHEGH) participates in ATP binding. His-34 serves as the catalytic Proton donor. Gln-61 contacts (R)-pantoate. Gln-61 is a binding site for beta-alanine. ATP is bound at residue 148 to 151 (GQKD). (R)-pantoate is bound at residue Gln-154. ATP is bound by residues Val-177 and 185 to 188 (LSSR).

This sequence belongs to the pantothenate synthetase family. Homodimer.

The protein resides in the cytoplasm. It catalyses the reaction (R)-pantoate + beta-alanine + ATP = (R)-pantothenate + AMP + diphosphate + H(+). Its pathway is cofactor biosynthesis; (R)-pantothenate biosynthesis; (R)-pantothenate from (R)-pantoate and beta-alanine: step 1/1. Catalyzes the condensation of pantoate with beta-alanine in an ATP-dependent reaction via a pantoyl-adenylate intermediate. This is Pantothenate synthetase from Streptomyces avermitilis (strain ATCC 31267 / DSM 46492 / JCM 5070 / NBRC 14893 / NCIMB 12804 / NRRL 8165 / MA-4680).